Consider the following 751-residue polypeptide: Palmitoyltransferase ZDHHC8B (751 aa).

The Cytoplasmic segment spans residues 1–13 (MPNSVGKRFKPTK). Residues 14–34 (YIPVSTAATLLVGSTTLFFVF) form a helical membrane-spanning segment. The Extracellular segment spans residues 35–41 (TCPWLTK). Residues 42 to 62 (AVSPVVPLYNGIVFLFVLANF) form a helical membrane-spanning segment. Residues 63 to 148 (SMATFMDPGV…NCIGRRNYRY (86 aa)) lie on the Cytoplasmic side of the membrane. The DHHC domain occupies 104-154 (KWCATCHFYRPPRCSHCSVCDNCVEEFDHHCPWVNNCIGRRNYRYFFLFLL). C134 acts as the S-palmitoyl cysteine intermediate in catalysis. Residues 149–169 (FFLFLLSLSVHMVGVFSFGLL) traverse the membrane as a helical segment. The Extracellular portion of the chain corresponds to 170-185 (FVLHHLETLSALHTTV). The helical transmembrane segment at 186-206 (TLVVMCVTGLFFIPVMGLTGF) threads the bilayer. The Cytoplasmic segment spans residues 207-751 (HMVLVARGRT…VGGTTYEISV (545 aa)). Disordered stretches follow at residues 293–346 (RSKS…PSTP), 437–461 (CTPLGGTKHETITSTPHRGVFSPGT), 633–659 (RSSASSLVRAPRTSTTSLHTDGGGMNR), 666–685 (RSPVHQSHQSPTSVPRSPSY), and 703–736 (HLGTREDIGQGKVNGQLKGQYGTPSGTPSRHTSV). Residues 326 to 338 (SQLTSSEESSLSS) show a composition bias toward low complexity. 3 stretches are compositionally biased toward polar residues: residues 633–651 (RSSASSLVRAPRTSTTSLH), 669–681 (VHQSHQSPTSVPR), and 724–733 (GTPSGTPSRH).

The protein belongs to the DHHC palmitoyltransferase family. ERF2/ZDHHC9 subfamily.

The protein localises to the golgi apparatus membrane. The protein resides in the mitochondrion membrane. It catalyses the reaction L-cysteinyl-[protein] + hexadecanoyl-CoA = S-hexadecanoyl-L-cysteinyl-[protein] + CoA. In terms of biological role, palmitoyltransferase that catalyzes the addition of palmitate onto various protein substrates and therefore function in several unrelated biological processes. The protein is Palmitoyltransferase ZDHHC8B of Danio rerio (Zebrafish).